The following is a 527-amino-acid chain: Probable malate:quinone oxidoreductase (527 aa).

It belongs to the MQO family. FAD is required as a cofactor.

The enzyme catalyses (S)-malate + a quinone = a quinol + oxaloacetate. It participates in carbohydrate metabolism; tricarboxylic acid cycle; oxaloacetate from (S)-malate (quinone route): step 1/1. This Pectobacterium atrosepticum (strain SCRI 1043 / ATCC BAA-672) (Erwinia carotovora subsp. atroseptica) protein is Probable malate:quinone oxidoreductase.